The primary structure comprises 140 residues: UPF0102 protein alr1796 (140 aa).

Belongs to the UPF0102 family.

The chain is UPF0102 protein alr1796 from Nostoc sp. (strain PCC 7120 / SAG 25.82 / UTEX 2576).